Reading from the N-terminus, the 310-residue chain is Lymphotoxin-beta (310 aa).

Residues 1 to 27 are Cytoplasmic-facing; the sequence is MGALGLQGRGGRPQGTGCLLLAVAGAT. Residues 28-48 form a helical; Signal-anchor for type II membrane protein membrane-spanning segment; it reads SLVTLLLAVPITVLAVLALVP. The Extracellular portion of the chain corresponds to 49–310; that stretch reads QEQGGLVMES…LGKCLHSANV (262 aa). Positions 67-86 are disordered; it reads QGLSKSNGLPSRLHSQIPSS. In terms of domain architecture, THD spans 138–293; it reads PAAHLIGAWM…GKTFFGAVMV (156 aa). Residue asparagine 272 is glycosylated (N-linked (GlcNAc...) asparagine).

Belongs to the tumor necrosis factor family. Heterotrimer of either two LTB and one LTA subunits or (less prevalent) two LTA and one LTB subunits.

It localises to the membrane. In terms of biological role, cytokine that binds to LTBR/TNFRSF3. May play a specific role in immune response regulation. Provides the membrane anchor for the attachment of the heterotrimeric complex to the cell surface. The protein is Lymphotoxin-beta (LTB) of Marmota monax (Woodchuck).